A 74-amino-acid polypeptide reads, in one-letter code: Alpha-conotoxin GeXIVA (74 aa).

Residues 1–22 form the signal peptide; it reads MKLTCVLIITVLFLTACQLTTA. Residues 23 to 46 constitute a propeptide that is removed on maturation; that stretch reads VTYSRGEHKHRALMSTGTNYRLPK. The tract at residues 56 to 64 is interacts with alpha-9-alpha-10 (CHRNA9-CHRNA10) nAChR; that stretch reads RSPYDRRRR.

Belongs to the conotoxin O1 superfamily. Post-translationally, the native disulfide bond pairing has not been studied. Three isomers may exist: the bead isomer (I-II; III-IV), the globular isomer (I-III; II-IV), the ribbon isomer (I-IV; II-III). They have all been synthesized and their activity tested. All of them show similar potency on alpha-9-alpha-10 (CHRNA9-CHRNA10) nAChR, showing that disulfide bonds does not significantly affect their activity. In addition, removal of disulfide bonds does not affect the activity on alpha-9-alpha-10 (CHRNA9-CHRNA10) nAChR either. As to expression, expressed by the venom duct.

It is found in the secreted. In terms of biological role, alpha-conotoxins act on postsynaptic membranes, they bind to the nicotinic acetylcholine receptors (nAChR) and thus inhibit them. This toxin is very potent on alpha-9-alpha-10/CHRNA9-CHRNA10 nAChR (IC(50)=4.61-12 nM for the bead isomer (I-II; III-IV), IC(50)=7-16 nM for the ribbon isomer (I-IV; II-III) and IC(50)=22.7 nM for the globular isomer (I-III; II-IV)). The bead isomer also shows a weak inhibition on other nAChRs (alpha-1-beta-1-delta-epsilon/CHRNA1-CHRNB1-CHRND-CHRNE, alpha-7/CHRNA7, alpha-6/alpha-3-beta-2-beta-3 (CHRNA6/CHRNA3-CHRNB2-CHRNB3), alpha-3-beta-2/CHRNA3-CHRNB2, alpha-2-beta-2/CHRNA2-CHRNB2, alpha-6/alpha-3-beta-4 (CHRNA6/CHRNA3-CHRNB4), alpha-4-beta-2/CHRNA4-CHRNB2, alpha-4-beta-4/CHRNA4-CHRNB4, alpha-2-beta-4/CHRNA2-CHRNB4, alpha-3-beta-4/CHRNA3-CHRNB4). The toxin blockade is voltage-dependent, and its binding site does not overlap with the binding site of the competitive antagonist alpha-conotoxin RgIA. The toxin inhibits Sf9 cell growth. Both the bead and ribbon isomers relieve pain effects in the rat chronic constriction injury (CCI) model of neuropathic pain, and in the acute pain model of tail flick test, but have no effect on motor performance. The sequence is that of Alpha-conotoxin GeXIVA from Conus generalis (General cone).